Consider the following 1469-residue polypeptide: Accumulation-associated protein (1469 aa).

Positions Met1–Ala52 are cleaved as a signal peptide. Disordered stretches follow at residues Ala52–Val164, Gly486–Thr511, and Glu528–Glu1443. Polar residues-rich tracts occupy residues Glu75 to Gln94 and Lys110 to Pro125. Basic and acidic residues predominate over residues Asp129–Glu144. The span at Leu145 to Val164 shows a compositional bias: polar residues. 7 G5 domains span residues Pro446–Glu528, Tyr574–Glu656, Tyr702–Glu784, Tyr830–Glu912, Tyr958–Glu1040, Tyr1086–Gln1168, and Val1211–Lys1296. Residues Thr489 to Thr500 are compositionally biased toward low complexity. Basic and acidic residues-rich tracts occupy residues Glu528–Phe537 and Pro589–Pro613. Low complexity predominate over residues Gly614 to Gly629. 2 stretches are compositionally biased toward basic and acidic residues: residues Lys631–Val646 and Glu655–Phe665. The segment covering Lys738–Gly757 has biased composition (low complexity). 2 stretches are compositionally biased toward basic and acidic residues: residues Lys759 to Phe793 and Pro845 to Pro869. Residues Gly870–Gly885 show a composition bias toward low complexity. The span at Lys887–Phe921 shows a compositional bias: basic and acidic residues. Over residues Lys994 to Gly1013 the composition is skewed to low complexity. A compositionally biased stretch (basic and acidic residues) spans Lys1015 to Phe1049. Residues Lys1122–Gly1141 show a composition bias toward low complexity. 3 stretches are compositionally biased toward basic and acidic residues: residues Lys1143 to Val1162, Pro1229 to Pro1253, and Lys1271 to Val1286. A compositionally biased stretch (polar residues) spans Thr1409–Glu1443. The short motif at Leu1432 to Gly1436 is the LPXTG sorting signal element. Pentaglycyl murein peptidoglycan amidated threonine is present on Thr1435. Positions Gly1436–Lys1469 are cleaved as a propeptide — removed by sortase.

Its subcellular location is the secreted. The protein resides in the cell wall. This chain is Accumulation-associated protein, found in Staphylococcus epidermidis (strain ATCC 12228 / FDA PCI 1200).